A 412-amino-acid chain; its full sequence is DnaJ homolog subfamily A member 2 (412 aa).

The J domain occupies 8–70 (KLYDILGVPP…EKRELYDRYG (63 aa)). N6-acetyllysine is present on K39. 2 positions are modified to phosphoserine: S78 and S123. The CR-type zinc finger occupies 130–214 (GKTTKLQLSK…CEGKKVIKEV (85 aa)). A Glycyl lysine isopeptide (Lys-Gly) (interchain with G-Cter in SUMO2) cross-link involves residue K134. Residues C143 and C146 each contribute to the Zn(2+) site. A CXXCXGXG motif repeat occupies 143–150 (CSACSGQG). Position 152 is an N6-acetyllysine (K152). 6 residues coordinate Zn(2+): C159, C162, C186, C189, C202, and C205. 3 CXXCXGXG motif repeats span residues 159-166 (CSACRGRG), 186-193 (CSDCNGEG), and 202-209 (CKKCEGKK). Residues 365–412 (IGETEEVELQEFDSTRGSGGGQRREAYNDSSDEESSSHHGPGVQCAHQ) form a disordered region. Residue Y391 is modified to Phosphotyrosine. S394 and S395 each carry phosphoserine. A Cysteine methyl ester modification is found at C409. C409 carries S-farnesyl cysteine lipidation. The propeptide at 410–412 (AHQ) is removed in mature form.

The protein resides in the membrane. Co-chaperone of Hsc70. Stimulates ATP hydrolysis and the folding of unfolded proteins mediated by HSPA1A/B (in vitro). The sequence is that of DnaJ homolog subfamily A member 2 (Dnaja2) from Mus musculus (Mouse).